Here is a 177-residue protein sequence, read N- to C-terminus: Large ribosomal subunit protein uL6 (177 aa).

Belongs to the universal ribosomal protein uL6 family. In terms of assembly, part of the 50S ribosomal subunit.

Functionally, this protein binds to the 23S rRNA, and is important in its secondary structure. It is located near the subunit interface in the base of the L7/L12 stalk, and near the tRNA binding site of the peptidyltransferase center. The polypeptide is Large ribosomal subunit protein uL6 (Rhizobium meliloti (strain 1021) (Ensifer meliloti)).